The primary structure comprises 153 residues: Superoxide dismutase [Cu-Zn] (153 aa).

Residue N24 is glycosylated (N-linked (GlcNAc...) asparagine). 3 residues coordinate Cu cation: H47, H49, and H64. An intrachain disulfide couples C58 to C147. Residues H64, H72, H81, and D84 each contribute to the Zn(2+) site. Residue H121 coordinates Cu cation. A compositionally biased stretch (basic and acidic residues) spans 126-137 (DLGRGGNEESKK). The tract at residues 126-145 (DLGRGGNEESKKTGNAGPRP) is disordered. A substrate-binding site is contributed by R144.

This sequence belongs to the Cu-Zn superoxide dismutase family. In terms of assembly, homodimer. The cofactor is Cu cation. It depends on Zn(2+) as a cofactor.

The protein resides in the cytoplasm. The catalysed reaction is 2 superoxide + 2 H(+) = H2O2 + O2. Functionally, destroys radicals which are normally produced within the cells and which are toxic to biological systems. This Humicola lutea protein is Superoxide dismutase [Cu-Zn].